The primary structure comprises 367 residues: Glutamate 5-kinase (367 aa).

Lysine 9 contributes to the ATP binding site. Substrate contacts are provided by serine 49, aspartate 136, and asparagine 148. ATP contacts are provided by residues 168-169 (TD) and 210-216 (TGGMKSK). Positions 276–350 (SGQIEIDAGA…GMQSQHIQAR (75 aa)) constitute a PUA domain.

Belongs to the glutamate 5-kinase family.

It localises to the cytoplasm. The enzyme catalyses L-glutamate + ATP = L-glutamyl 5-phosphate + ADP. It participates in amino-acid biosynthesis; L-proline biosynthesis; L-glutamate 5-semialdehyde from L-glutamate: step 1/2. In terms of biological role, catalyzes the transfer of a phosphate group to glutamate to form L-glutamate 5-phosphate. The chain is Glutamate 5-kinase from Bacillus cereus (strain ATCC 10987 / NRS 248).